The primary structure comprises 426 residues: Serine--tRNA ligase (426 aa).

235 to 237 (TAE) serves as a coordination point for L-serine. ATP is bound at residue 266 to 268 (RRE). Residue Glu-289 coordinates L-serine. 353–356 (EISS) provides a ligand contact to ATP. Ser-389 lines the L-serine pocket.

The protein belongs to the class-II aminoacyl-tRNA synthetase family. Type-1 seryl-tRNA synthetase subfamily. Homodimer. The tRNA molecule binds across the dimer.

Its subcellular location is the cytoplasm. It carries out the reaction tRNA(Ser) + L-serine + ATP = L-seryl-tRNA(Ser) + AMP + diphosphate + H(+). The catalysed reaction is tRNA(Sec) + L-serine + ATP = L-seryl-tRNA(Sec) + AMP + diphosphate + H(+). It participates in aminoacyl-tRNA biosynthesis; selenocysteinyl-tRNA(Sec) biosynthesis; L-seryl-tRNA(Sec) from L-serine and tRNA(Sec): step 1/1. Functionally, catalyzes the attachment of serine to tRNA(Ser). Is also able to aminoacylate tRNA(Sec) with serine, to form the misacylated tRNA L-seryl-tRNA(Sec), which will be further converted into selenocysteinyl-tRNA(Sec). This Nostoc sp. (strain PCC 7120 / SAG 25.82 / UTEX 2576) protein is Serine--tRNA ligase.